The sequence spans 225 residues: Cytidylate kinase (225 aa).

10-18 (GPASSGKST) is a binding site for ATP.

It belongs to the cytidylate kinase family. Type 1 subfamily.

The protein localises to the cytoplasm. It carries out the reaction CMP + ATP = CDP + ADP. The catalysed reaction is dCMP + ATP = dCDP + ADP. This Streptococcus gordonii (strain Challis / ATCC 35105 / BCRC 15272 / CH1 / DL1 / V288) protein is Cytidylate kinase.